Reading from the N-terminus, the 271-residue chain is Glutamate racemase (271 aa).

Substrate-binding positions include 12 to 13 (DS) and 44 to 45 (YG). The Proton donor/acceptor role is filled by C75. 76–77 (NS) is a binding site for substrate. Residue C185 is the Proton donor/acceptor of the active site. Residue 186–187 (TH) coordinates substrate.

The protein belongs to the aspartate/glutamate racemases family.

It carries out the reaction L-glutamate = D-glutamate. Its pathway is cell wall biogenesis; peptidoglycan biosynthesis. Its function is as follows. Provides the (R)-glutamate required for cell wall biosynthesis. The polypeptide is Glutamate racemase (Mycobacterium bovis (strain BCG / Pasteur 1173P2)).